The following is a 705-amino-acid chain: MNQNRTGGVSKVKNKSAAPVQITAEQILRVAHENQQTLPKAPPKQVITDQEELEDYRLRKRQQYESLLGRNRKTAAIYIKYAAWEESQKDLTRARSVFERFLDIDHRIPTVWIKYAEMEMKNKNINLARNIWDRAVCLLPRVSQLWFKYTFMEDMLGNYPAARAIFERWMQWKPEPQAWNSYLKFEQRLKLFENTRLIFEKYILVHPYIKTWIKYTKFEERLGNIENARTIFQRAIEFLGEDGNDEQLFIAFAKFEEKYKEIERARVIYKYAIDHVPKSRAKDLFDTFTNFEKQHGDRIGIEDVVLGKKRFQYEEEIKKNSKNYDIWFDYLKMEEINGEIEKTREIYERSIGNLPPTNEKKHWKRYIYLWINYALFEELISKDMERARSVYSECIKLIPHKEFSFSKIWILYANFEIRQLNLDKARLIYGQAIGRNPKSKIFDQYIHLEIELGNFDRVRTLYEKYLEIMPDNCDAWCKFAQLETELGETVRARAIFELAIQQPNLDRPEVVWKDFIDSEIQLKQFDFVKQLYRKLLEKTNHVKVWIGFIKFVHSIKDKQQQKQRQQQQEEDGDSNTTKKDGGDDDNNDDINKPTREIFIEAHKSLSNSDKEERLLLLESWKEFEQTFGNQETLNQVLKKIPQRVIKRRSDGNGGIEEYFDYIFPEEEKSTQTSLKLLEAAQRWKKLKQQQELQKQQELQKQQQDS.

HAT repeat units follow at residues 55 to 87 (DYRL…WEES), 89 to 121 (KDLT…MEMK), 123 to 155 (KNIN…MEDM), 157 to 188 (GNYP…FEQR), 190 to 221 (KLFE…FEER), 223 to 258 (GNIE…FEEK), 260 to 294 (KEIE…FEKQ), 304 to 336 (VVLG…MEEI), 338 to 372 (GEIE…LWIN), 382 to 418 (KDME…FEIR), 420 to 451 (LNLD…LEIE), 453 to 485 (GNFD…LETE), 487 to 521 (GETV…SEIQ), and 523 to 554 (KQFD…FVHS). The interval 559–591 (QQQKQRQQQQEEDGDSNTTKKDGGDDDNNDDIN) is disordered. The stretch at 597-629 (IFIEAHKSLSNSDKEERLLLLESWKEFEQTFGN) is one HAT 15 repeat.

It belongs to the crooked-neck family. As to quaternary structure, identified in the spliceosome C complex.

It is found in the nucleus. The protein resides in the nucleus speckle. Functionally, involved in pre-mRNA splicing process. The chain is Crooked neck-like protein 1 (crnkl1) from Dictyostelium discoideum (Social amoeba).